The chain runs to 457 residues: Embryogenesis-associated protein EMB8 (457 aa).

Residues lysine 39–arginine 59 are disordered. Residues proline 151 to leucine 391 enclose the AB hydrolase-1 domain. Active-site charge relay system residues include serine 231, aspartate 361, and histidine 390. Residues valine 438–asparagine 447 are compositionally biased toward basic and acidic residues. The tract at residues valine 438–asparagine 457 is disordered. A compositionally biased stretch (polar residues) spans asparagine 448–asparagine 457.

This sequence belongs to the AB hydrolase superfamily. AB hydrolase 4 family.

This chain is Embryogenesis-associated protein EMB8 (EMB8), found in Picea glauca (White spruce).